The sequence spans 357 residues: MTTLKNDRFLRALLREPVDTTPIWMMRQAGRYLPEYRETRSKAGDFLSLCKNTEFACEVTLQPLRRYDLDAAILFSDILTIPDALGLGLYFETGEGPKFHKTVRTEQDVANLPKLNAKADLDYVMNAVSTIRSALGGQVPLIGFSGSPWTLATYMVEGGSSKEFRFTKQMMYAQPEVLHALLDHLADSVIDYLNAQIDAGAQAIQIFDSWGGALAHREYVEFSLNYMKKIIAGLQREKDGRRIPVIVFTKGGGQWLEPMITTGADALGLDWTTPLNTARTTVAGRVALQGNLDPAVLYGSAASIEKAVKAMLDDAYANGEKTGYVANLGHGITQWVDPAQPKIFVDTVHEYSAKYLG.

Substrate contacts are provided by residues 27 to 31, D77, Y154, S209, and H330; that span reads RQAGR.

Belongs to the uroporphyrinogen decarboxylase family. As to quaternary structure, homodimer.

It is found in the cytoplasm. It carries out the reaction uroporphyrinogen III + 4 H(+) = coproporphyrinogen III + 4 CO2. Its pathway is porphyrin-containing compound metabolism; protoporphyrin-IX biosynthesis; coproporphyrinogen-III from 5-aminolevulinate: step 4/4. Functionally, catalyzes the decarboxylation of four acetate groups of uroporphyrinogen-III to yield coproporphyrinogen-III. This Acinetobacter baumannii (strain AB0057) protein is Uroporphyrinogen decarboxylase.